Here is a 64-residue protein sequence, read N- to C-terminus: Large ribosomal subunit protein uL29 (64 aa).

It belongs to the universal ribosomal protein uL29 family.

The sequence is that of Large ribosomal subunit protein uL29 from Lacticaseibacillus paracasei (strain ATCC 334 / BCRC 17002 / CCUG 31169 / CIP 107868 / KCTC 3260 / NRRL B-441) (Lactobacillus paracasei).